The chain runs to 427 residues: MASVVLIGTQWGDEGKGKVTDFLAEKADLVVRYQGGNNAGHTVVAKGEEFKLHLIPSGILYEDKTCVIGNGVVVDPKVLLEELAYLSERKVKTGKLLISSNAHVIMPYHRLLDALEEDSRGEHKIGTTKRGIGPAYMDKTLRIGIRIMDLIDDEEFAAKLRRNLQEKNNLLTKVYGVEPLDYDAIYQEYSGYAQKIRGLVADSSLVIDESLKAGEKVLFEGAQGTLLDLDHGTYPYVTSSHPIAGGACTGAGVGPTRINRVVGVIKAYTTRVGEGPFPTELADETGELMRQNGHEFGTTTGRARRCGWFDAMIARYAVRVSGISDFALMKLDVLSGFEKIKICVGYRVNNEVIYEFPQSQKIFKACEPVYEVIEGWQEDITGVTHFEDLPKAAQDYVRRIEQLTETQVTLIAVGPGREQTIVRGEIF.

GTP is bound by residues 12 to 18 (GDEGKGK) and 40 to 42 (GHT). Asp-13 (proton acceptor) is an active-site residue. Positions 13 and 40 each coordinate Mg(2+). Residues 13–16 (DEGK), 38–41 (NAGH), Thr-128, Arg-142, Gln-223, Thr-238, and Arg-302 each bind IMP. His-41 functions as the Proton donor in the catalytic mechanism. 298-304 (TTTGRAR) contributes to the substrate binding site. Residues Arg-304, 330-332 (KLD), and 412-414 (AVG) contribute to the GTP site.

This sequence belongs to the adenylosuccinate synthetase family. Homodimer. Mg(2+) serves as cofactor.

Its subcellular location is the cytoplasm. The catalysed reaction is IMP + L-aspartate + GTP = N(6)-(1,2-dicarboxyethyl)-AMP + GDP + phosphate + 2 H(+). It participates in purine metabolism; AMP biosynthesis via de novo pathway; AMP from IMP: step 1/2. Its function is as follows. Plays an important role in the de novo pathway of purine nucleotide biosynthesis. Catalyzes the first committed step in the biosynthesis of AMP from IMP. This Desulfitobacterium hafniense (strain Y51) protein is Adenylosuccinate synthetase.